Consider the following 457-residue polypeptide: Siroheme synthase (457 aa).

Residues 1–204 (MDHLPIFCQL…NDQKAITETT (204 aa)) are precorrin-2 dehydrogenase /sirohydrochlorin ferrochelatase. NAD(+) is bound by residues 22–23 (DV) and 43–44 (LA). Serine 128 carries the phosphoserine modification. Residues 216–457 (GEVVLVGAGP…RDKLNWFSNH (242 aa)) are uroporphyrinogen-III C-methyltransferase. An S-adenosyl-L-methionine-binding site is contributed by proline 225. The Proton acceptor role is filled by aspartate 248. Residue lysine 270 is the Proton donor of the active site. Residues 301 to 303 (GGD), isoleucine 306, 331 to 332 (TA), methionine 382, and glycine 411 each bind S-adenosyl-L-methionine.

The protein in the N-terminal section; belongs to the precorrin-2 dehydrogenase / sirohydrochlorin ferrochelatase family. In the C-terminal section; belongs to the precorrin methyltransferase family.

It catalyses the reaction uroporphyrinogen III + 2 S-adenosyl-L-methionine = precorrin-2 + 2 S-adenosyl-L-homocysteine + H(+). The enzyme catalyses precorrin-2 + NAD(+) = sirohydrochlorin + NADH + 2 H(+). The catalysed reaction is siroheme + 2 H(+) = sirohydrochlorin + Fe(2+). Its pathway is cofactor biosynthesis; adenosylcobalamin biosynthesis; precorrin-2 from uroporphyrinogen III: step 1/1. The protein operates within cofactor biosynthesis; adenosylcobalamin biosynthesis; sirohydrochlorin from precorrin-2: step 1/1. It participates in porphyrin-containing compound metabolism; siroheme biosynthesis; precorrin-2 from uroporphyrinogen III: step 1/1. It functions in the pathway porphyrin-containing compound metabolism; siroheme biosynthesis; siroheme from sirohydrochlorin: step 1/1. Its pathway is porphyrin-containing compound metabolism; siroheme biosynthesis; sirohydrochlorin from precorrin-2: step 1/1. Multifunctional enzyme that catalyzes the SAM-dependent methylations of uroporphyrinogen III at position C-2 and C-7 to form precorrin-2 via precorrin-1. Then it catalyzes the NAD-dependent ring dehydrogenation of precorrin-2 to yield sirohydrochlorin. Finally, it catalyzes the ferrochelation of sirohydrochlorin to yield siroheme. The sequence is that of Siroheme synthase from Escherichia coli O45:K1 (strain S88 / ExPEC).